The chain runs to 444 residues: Methylenetetrahydrofolate--tRNA-(uracil-5-)-methyltransferase TrmFO (444 aa).

Gly-10–Gly-15 provides a ligand contact to FAD.

It belongs to the MnmG family. TrmFO subfamily. It depends on FAD as a cofactor.

The protein resides in the cytoplasm. It carries out the reaction uridine(54) in tRNA + (6R)-5,10-methylene-5,6,7,8-tetrahydrofolate + NADH + H(+) = 5-methyluridine(54) in tRNA + (6S)-5,6,7,8-tetrahydrofolate + NAD(+). The enzyme catalyses uridine(54) in tRNA + (6R)-5,10-methylene-5,6,7,8-tetrahydrofolate + NADPH + H(+) = 5-methyluridine(54) in tRNA + (6S)-5,6,7,8-tetrahydrofolate + NADP(+). In terms of biological role, catalyzes the folate-dependent formation of 5-methyl-uridine at position 54 (M-5-U54) in all tRNAs. The sequence is that of Methylenetetrahydrofolate--tRNA-(uracil-5-)-methyltransferase TrmFO from Streptococcus uberis (strain ATCC BAA-854 / 0140J).